We begin with the raw amino-acid sequence, 269 residues long: Carbohydrate metabolism regulator TYE7 (269 aa).

The disordered stretch occupies residues 146 to 178 (QPKIKQEPGTKAATKPKRRAPRKKLTESQKKAH). The span at 159–168 (TKPKRRAPRK) shows a compositional bias: basic residues. A compositionally biased stretch (basic and acidic residues) spans 169–178 (KLTESQKKAH). Residues 173 to 244 (SQKKAHNKIE…EKATEYILHL (72 aa)) enclose the bHLH domain.

In terms of assembly, efficient DNA binding requires dimerization with another bHLH protein.

Its subcellular location is the nucleus. In terms of biological role, key transcriptional regulator of carbohydrate metabolism. Binds the promoter sequences of the glycolytic genes at the CANNTG motif and activates their expression during growth on either fermentable or non-fermentable carbon sources as well as under hypoxic growth conditions. Complete glycolytic activation by GAL4 and TYE7 is required for full virulence. Involved in biofilm formation and negatively regulates hyphal formation under hypoxia. Also controls the expression of the copper transport protein CTR1. This is Carbohydrate metabolism regulator TYE7 (TYE7) from Candida albicans (strain SC5314 / ATCC MYA-2876) (Yeast).